A 194-amino-acid polypeptide reads, in one-letter code: Orotate phosphoribosyltransferase (194 aa).

Residues Arg-102, Lys-103, Lys-106, His-108, and 129–137 contribute to the 5-phospho-alpha-D-ribose 1-diphosphate site; that span reads EDVVTTGGS. Thr-133 and Arg-161 together coordinate orotate.

This sequence belongs to the purine/pyrimidine phosphoribosyltransferase family. PyrE subfamily. Homodimer. Mg(2+) is required as a cofactor.

It catalyses the reaction orotidine 5'-phosphate + diphosphate = orotate + 5-phospho-alpha-D-ribose 1-diphosphate. It participates in pyrimidine metabolism; UMP biosynthesis via de novo pathway; UMP from orotate: step 1/2. Its function is as follows. Catalyzes the transfer of a ribosyl phosphate group from 5-phosphoribose 1-diphosphate to orotate, leading to the formation of orotidine monophosphate (OMP). This Synechococcus sp. (strain CC9902) protein is Orotate phosphoribosyltransferase.